The sequence spans 205 residues: Guanylate kinase (205 aa).

The Guanylate kinase-like domain maps to 5–183 (GLLIVFSGPS…AAERVKKIIE (179 aa)). Position 12-19 (12-19 (GPSGVGKG)) interacts with ATP.

The protein belongs to the guanylate kinase family.

The protein resides in the cytoplasm. The catalysed reaction is GMP + ATP = GDP + ADP. Its function is as follows. Essential for recycling GMP and indirectly, cGMP. The chain is Guanylate kinase (gmk) from Lactococcus lactis subsp. lactis (strain IL1403) (Streptococcus lactis).